The following is a 218-amino-acid chain: Small ribosomal subunit protein uS3c (218 aa).

The KH type-2 domain maps to 47–118 (VQKNMRTSSG…KLNIAVTRIA (72 aa)).

The protein belongs to the universal ribosomal protein uS3 family. As to quaternary structure, part of the 30S ribosomal subunit.

The protein resides in the plastid. The protein localises to the chloroplast. The sequence is that of Small ribosomal subunit protein uS3c (rps3) from Solanum bulbocastanum (Wild potato).